The primary structure comprises 174 residues: uncharacterized protein (174 aa).

The 133-residue stretch at serine 42–arginine 174 folds into the N-acetyltransferase domain.

The protein belongs to the acetyltransferase family. Ycf52 subfamily.

The protein resides in the plastid. It is found in the chloroplast. This is an uncharacterized protein from Pyropia yezoensis (Susabi-nori).